We begin with the raw amino-acid sequence, 97 residues long: Large ribosomal subunit protein eL21 (97 aa).

It belongs to the eukaryotic ribosomal protein eL21 family.

This Methanospirillum hungatei JF-1 (strain ATCC 27890 / DSM 864 / NBRC 100397 / JF-1) protein is Large ribosomal subunit protein eL21.